The chain runs to 160 residues: Cytochrome b6-f complex subunit 4 (160 aa).

Helical transmembrane passes span 36 to 56 (LLYI…GLAV), 95 to 115 (LLGV…PFLE), and 131 to 151 (TVFL…TLPI).

This sequence belongs to the cytochrome b family. PetD subfamily. In terms of assembly, the 4 large subunits of the cytochrome b6-f complex are cytochrome b6, subunit IV (17 kDa polypeptide, petD), cytochrome f and the Rieske protein, while the 4 small subunits are petG, petL, petM and petN. The complex functions as a dimer.

The protein localises to the plastid. It is found in the chloroplast thylakoid membrane. In terms of biological role, component of the cytochrome b6-f complex, which mediates electron transfer between photosystem II (PSII) and photosystem I (PSI), cyclic electron flow around PSI, and state transitions. This is Cytochrome b6-f complex subunit 4 from Oryza nivara (Indian wild rice).